An 836-amino-acid polypeptide reads, in one-letter code: Periostin (836 aa).

The first 21 residues, 1 to 21 (MIPFLPMFSLLLLLIVNPINA), serve as a signal peptide directing secretion. In terms of domain architecture, EMI spans 40–94 (GPNVCALQQILGTKKKYFSTCKNWYKKSICGQKTTVLYECCPGYMRMEGMKGCPA). 5 disulfide bridges follow: Cys44/Cys80, Cys69/Cys333, Cys79/Cys92, Cys208/Cys311, and Cys467/Cys472. Cys60 is modified (S-cysteinyl cysteine). FAS1 domains follow at residues 97–230 (PIDH…DRVL), 234–365 (GTSI…DQVL), 368–492 (DSAK…REII), and 496–628 (EKSL…DKLL). Asn599 carries N-linked (GlcNAc...) asparagine glycosylation.

As to quaternary structure, homodimer. Interacts with BMP1 and fibronectin. Gamma-carboxylation is controversial. Gamma-carboxyglutamated; gamma-carboxyglutamate residues are formed by vitamin K dependent carboxylation; this may be required for calcium binding. According to a more recent report, does not contain vitamin K-dependent gamma-carboxyglutamate residues. As to expression, widely expressed with highest levels in aorta, stomach, lower gastrointestinal tract, placenta, uterus, thyroid tissue and breast. Expressed in the kidney. Expressed in the lung. Up-regulated in epithelial ovarian tumors. Not expressed in normal ovaries. Also highly expressed at the tumor periphery of lung carcinoma tissue but not within the tumor. Overexpressed in breast cancers.

It localises to the golgi apparatus. Its subcellular location is the secreted. The protein resides in the extracellular space. It is found in the extracellular matrix. Induces cell attachment and spreading and plays a role in cell adhesion. Enhances incorporation of BMP1 in the fibronectin matrix of connective tissues, and subsequent proteolytic activation of lysyl oxidase LOX. The protein is Periostin (POSTN) of Homo sapiens (Human).